The sequence spans 293 residues: 4-hydroxy-tetrahydrodipicolinate synthase (293 aa).

Thr-45 is a pyruvate binding site. Tyr-133 functions as the Proton donor/acceptor in the catalytic mechanism. Residue Lys-161 is the Schiff-base intermediate with substrate of the active site. Position 204 (Ile-204) interacts with pyruvate.

The protein belongs to the DapA family. In terms of assembly, homotetramer; dimer of dimers.

It is found in the cytoplasm. It catalyses the reaction L-aspartate 4-semialdehyde + pyruvate = (2S,4S)-4-hydroxy-2,3,4,5-tetrahydrodipicolinate + H2O + H(+). Its pathway is amino-acid biosynthesis; L-lysine biosynthesis via DAP pathway; (S)-tetrahydrodipicolinate from L-aspartate: step 3/4. In terms of biological role, catalyzes the condensation of (S)-aspartate-beta-semialdehyde [(S)-ASA] and pyruvate to 4-hydroxy-tetrahydrodipicolinate (HTPA). The polypeptide is 4-hydroxy-tetrahydrodipicolinate synthase (Yersinia pseudotuberculosis serotype O:1b (strain IP 31758)).